A 78-amino-acid polypeptide reads, in one-letter code: Acyl carrier protein (78 aa).

A Carrier domain is found at 2–77 (SDTAERVKKI…DAVKFIDKAS (76 aa)). Residue S37 is modified to O-(pantetheine 4'-phosphoryl)serine.

Belongs to the acyl carrier protein (ACP) family. Post-translationally, 4'-phosphopantetheine is transferred from CoA to a specific serine of apo-ACP by AcpS. This modification is essential for activity because fatty acids are bound in thioester linkage to the sulfhydryl of the prosthetic group.

The protein localises to the cytoplasm. It functions in the pathway lipid metabolism; fatty acid biosynthesis. Its function is as follows. Carrier of the growing fatty acid chain in fatty acid biosynthesis. The chain is Acyl carrier protein from Brucella abortus (strain S19).